The chain runs to 374 residues: Probable neutral protease 2 homolog ARB_00849 (374 aa).

The first 19 residues, 1–19 (MKFLTALSAIGALVATATA), serve as a signal peptide directing secretion. The propeptide occupies 20 to 189 (AAVPNTPAKQ…KKSRGTIDKR (170 aa)). Intrachain disulfides connect Cys197–Cys268 and Cys275–Cys293. His318 contributes to the Zn(2+) binding site. Glu319 is a catalytic residue. His322 and Asp333 together coordinate Zn(2+).

It belongs to the peptidase M35 family. It depends on Zn(2+) as a cofactor.

It localises to the secreted. The catalysed reaction is Preferential cleavage of bonds with hydrophobic residues in P1'. Also 3-Asn-|-Gln-4 and 8-Gly-|-Ser-9 bonds in insulin B chain.. In terms of biological role, probable secreted metalloprotease that shows high activities on basic nuclear substrates such as histone and protamine. May be involved in virulence. This chain is Probable neutral protease 2 homolog ARB_00849, found in Arthroderma benhamiae (strain ATCC MYA-4681 / CBS 112371) (Trichophyton mentagrophytes).